Reading from the N-terminus, the 192-residue chain is Thymidylate kinase (192 aa).

ATP is bound at residue glycine 7–serine 14.

It belongs to the thymidylate kinase family.

The enzyme catalyses dTMP + ATP = dTDP + ADP. In terms of biological role, phosphorylation of dTMP to form dTDP in both de novo and salvage pathways of dTTP synthesis. The sequence is that of Thymidylate kinase (tmk) from Campylobacter jejuni subsp. jejuni serotype O:2 (strain ATCC 700819 / NCTC 11168).